The sequence spans 621 residues: Chaperone protein HscA homolog (621 aa).

Belongs to the heat shock protein 70 family.

In terms of biological role, chaperone involved in the maturation of iron-sulfur cluster-containing proteins. Has a low intrinsic ATPase activity which is markedly stimulated by HscB. This Azotobacter vinelandii (strain DJ / ATCC BAA-1303) protein is Chaperone protein HscA homolog.